The primary structure comprises 298 residues: Ribose-phosphate pyrophosphokinase (298 aa).

ATP contacts are provided by residues D33 to E35 and R91 to Q92. H125 and D164 together coordinate Mg(2+). The active site involves K187. 2 residues coordinate D-ribose 5-phosphate: R189 and D224.

It belongs to the ribose-phosphate pyrophosphokinase family. Class III (archaeal) subfamily. Mg(2+) serves as cofactor.

Its subcellular location is the cytoplasm. The enzyme catalyses D-ribose 5-phosphate + ATP = 5-phospho-alpha-D-ribose 1-diphosphate + AMP + H(+). It functions in the pathway metabolic intermediate biosynthesis; 5-phospho-alpha-D-ribose 1-diphosphate biosynthesis; 5-phospho-alpha-D-ribose 1-diphosphate from D-ribose 5-phosphate (route I): step 1/1. In terms of biological role, involved in the biosynthesis of the central metabolite phospho-alpha-D-ribosyl-1-pyrophosphate (PRPP) via the transfer of pyrophosphoryl group from ATP to 1-hydroxyl of ribose-5-phosphate (Rib-5-P). This chain is Ribose-phosphate pyrophosphokinase, found in Methanobrevibacter smithii (strain ATCC 35061 / DSM 861 / OCM 144 / PS).